Here is a 388-residue protein sequence, read N- to C-terminus: MASQTGVLLLNLGGPDRPEDVRPFLYNLFSDPEIIRLPFRWLQKPLAWFISTSRARRSQANYAQIGGGSPLRRITEQQARALKDALEGIGIEANLYIGMRYWHPFTEEAIAQIKADQIRELVILPLYPQFSISTSGSSFRLLESLWNQDPELQKIRYTLIPSWYNHPGYVAAMADLIRQELDRCPNPDEAVIFFSAHGVPKSYVTEAGDPYQEEIEACVRLIMAALNRPNAHVLAYQSRVGPVEWLQPYTEDVILELAAQGVKTLVVVPISFVSEHIETLQEIDIEYREIAAEAGIEVFRRVPALNDHNGFISALAQLVKEALAAPPRTFAEVNQSRKRVKLYPQERWEWGMTSAAERWNGRLAMLGFLALMIELISGQGPLHMLGLL.

Residues H197 and E278 each coordinate Fe cation.

Belongs to the ferrochelatase family.

The protein resides in the cytoplasm. The enzyme catalyses heme b + 2 H(+) = protoporphyrin IX + Fe(2+). The protein operates within porphyrin-containing compound metabolism; protoheme biosynthesis; protoheme from protoporphyrin-IX: step 1/1. Catalyzes the ferrous insertion into protoporphyrin IX. This is Ferrochelatase from Thermosynechococcus vestitus (strain NIES-2133 / IAM M-273 / BP-1).